A 197-amino-acid polypeptide reads, in one-letter code: Elongation factor Ts (197 aa).

Residues 81–84 form an involved in Mg(2+) ion dislocation from EF-Tu region; it reads TDFV.

This sequence belongs to the EF-Ts family.

The protein localises to the cytoplasm. Associates with the EF-Tu.GDP complex and induces the exchange of GDP to GTP. It remains bound to the aminoacyl-tRNA.EF-Tu.GTP complex up to the GTP hydrolysis stage on the ribosome. The protein is Elongation factor Ts of Persephonella marina (strain DSM 14350 / EX-H1).